The chain runs to 1031 residues: MGRESRHYRKRSASRGRSGSRSRSRSPSDKRSKRGDDRRSRSRDRDRRRERSRSRDKRRSRSRDRKRLRRSRSRERDRSRERRRSRSRDRRRSRSRSRGRRSRSSSPGNKSKKTENRSRSKEKTDGGESSKEKKKDKDDKEDEKEKDAGNFDQNKLEEEMRKRKERVEKWREEQRKKAMENIGELKKEIEEMKQGKKWSLEDDDDDEDDPAEAEKEGNEMEGEELDPLDAYMEEVKEEVKKFNMRSVKGGGGNEKKSGPTVTKVVTVVTTKKAVVDSDKKKGELMENDQDAMEYSSEEEEVDLQTALTGYQTKQRKLLEPVDHGKIEYEPFRKNFYVEVPELAKMSQEEVNVFRLEMEGITVKGKGCPKPIKSWVQCGISMKILNSLKKHGYEKPTPIQTQAIPAIMSGRDLIGIAKTGSGKTIAFLLPMFRHIMDQRSLEEGEGPIAVIMTPTRELALQITKECKKFSKTLGLRVVCVYGGTGISEQIAELKRGAEIIVCTPGRMIDMLAANSGRVTNLRRVTYVVLDEADRMFDMGFEPQVMRIVDNVRPDRQTVMFSATFPRAMEALARRILSKPIEVQVGGRSVVCSDVEQQVIVIEEEKKFLKLLELLGHYQESGSVIIFVDKQEHADGLLKDLMRASYPCMSLHGGIDQYDRDSIINDFKNGTCKLLVATSVAARGLDVKHLILVVNYSCPNHYEDYVHRAGRTGRAGNKGYAYTFITEDQARYAGDIIKALELSGTAVPPDLEKLWSDFKDQQKAEGKIIKKSSGFSGKGFKFDETEQALANERKKLQKAALGLQDSDDEDAAVDIDEQIESMFNSKKRVKDMAAPGTSSVPAPTAGNAEKLEIAKRLALRINAQKNLGIESQDVMQQATNAILRGGTILAPTVSAKTIAEQLAEKINAKLNYVPLEKQEEERQDGGQNESFKRYEEELEINDFPQTARWKVTSKEALQRISEYSEAAITIRGTYFPPGKEPKEGERKIYLAIESANELAVQKAKAEITRLIKEELIRLQNSYQPTNKGRYKVL.

Over residues Met-1 to Ser-24 the composition is skewed to basic residues. Residues Met-1 to Leu-228 form a disordered region. Gly-2 carries the N-myristoyl glycine lipid modification. The segment covering Ser-26 to Arg-49 has biased composition (basic and acidic residues). Composition is skewed to basic residues over residues Glu-50–Ser-73 and Glu-81–Arg-103. Over residues Lys-112–Leu-200 the composition is skewed to basic and acidic residues. The stretch at Asp-152 to Lys-197 forms a coiled coil. A Glycyl lysine isopeptide (Lys-Gly) (interchain with G-Cter in SUMO2) cross-link involves residue Lys-186. A Phosphoserine modification is found at Ser-199. 2 stretches are compositionally biased toward acidic residues: residues Glu-201 to Ala-211 and Glu-219 to Leu-228. The residue at position 263 (Lys-263) is an N6-acetyllysine. Tyr-294 bears the Phosphotyrosine mark. Phosphoserine is present on residues Ser-295 and Ser-296. A Glycyl lysine isopeptide (Lys-Gly) (interchain with G-Cter in SUMO2) cross-link involves residue Lys-325. Residue Ser-346 is modified to Phosphoserine. Positions Lys-372–Thr-400 match the Q motif motif. Positions Ile-403–Val-581 constitute a Helicase ATP-binding domain. Ala-416 to Thr-423 provides a ligand contact to ATP. The DEAD box motif lies at Asp-529–Asp-532. A Helicase C-terminal domain is found at Asp-592–Trp-753. At Lys-776 the chain carries N6-acetyllysine. A Glycyl lysine isopeptide (Lys-Gly) (interchain with G-Cter in SUMO2) cross-link involves residue Lys-779. Phosphoserine is present on Ser-804. Lys-903 is subject to N6-acetyllysine. Residues Lys-907 and Lys-915 each participate in a glycyl lysine isopeptide (Lys-Gly) (interchain with G-Cter in SUMO2) cross-link. Residue Ser-928 is modified to Phosphoserine.

The protein belongs to the DEAD box helicase family. DDX46/PRP5 subfamily. In terms of assembly, component of the 17S U2 SnRNP complex, a ribonucleoprotein complex that contains small nuclear RNA (snRNA) U2 and a number of specific proteins. Within the 17S U2 SnRNP complex, DDX46 is part of the SF3B subcomplex, which is required for 'A' complex assembly formed by the stable binding of U2 snRNP to the branchpoint sequence in pre-mRNA. Recruited to the 17S U2 SnRNP complex following release of DDX42; DDX42 and DDX46 bind the SF3B subcomplex in a competitive manner.

It is found in the nucleus speckle. Its subcellular location is the nucleus. The protein resides in the cajal body. The enzyme catalyses ATP + H2O = ADP + phosphate + H(+). In terms of biological role, component of the 17S U2 SnRNP complex of the spliceosome, a large ribonucleoprotein complex that removes introns from transcribed pre-mRNAs. The 17S U2 SnRNP complex (1) directly participates in early spliceosome assembly and (2) mediates recognition of the intron branch site during pre-mRNA splicing by promoting the selection of the pre-mRNA branch-site adenosine, the nucleophile for the first step of splicing. Within the 17S U2 SnRNP complex, DDX46 plays essential roles during assembly of pre-spliceosome and proofreading of the branch site. This is Probable ATP-dependent RNA helicase DDX46 from Homo sapiens (Human).